The chain runs to 591 residues: Aspartate--tRNA(Asp/Asn) ligase (591 aa).

Glu176 contacts L-aspartate. Residues 200–203 (QLFK) form an aspartate region. Residue Arg222 participates in L-aspartate binding. ATP-binding positions include 222-224 (RDE) and Gln231. Residue His450 coordinates L-aspartate. Glu484 is a binding site for ATP. Arg491 contributes to the L-aspartate binding site. 536 to 539 (GLDR) is an ATP binding site.

Belongs to the class-II aminoacyl-tRNA synthetase family. Type 1 subfamily. In terms of assembly, homodimer.

It localises to the cytoplasm. The catalysed reaction is tRNA(Asx) + L-aspartate + ATP = L-aspartyl-tRNA(Asx) + AMP + diphosphate. Its function is as follows. Aspartyl-tRNA synthetase with relaxed tRNA specificity since it is able to aspartylate not only its cognate tRNA(Asp) but also tRNA(Asn). Reaction proceeds in two steps: L-aspartate is first activated by ATP to form Asp-AMP and then transferred to the acceptor end of tRNA(Asp/Asn). This chain is Aspartate--tRNA(Asp/Asn) ligase, found in Bacillus thuringiensis (strain Al Hakam).